Consider the following 64-residue polypeptide: Large ribosomal subunit protein bL33 (64 aa).

It belongs to the bacterial ribosomal protein bL33 family.

This Parasynechococcus marenigrum (strain WH8102) protein is Large ribosomal subunit protein bL33.